The following is a 503-amino-acid chain: Splicing factor 3A subunit 3 (503 aa).

Disordered stretches follow at residues 296–317 and 341–384; these read PALM…EHER and ATKE…NPKN. A compositionally biased stretch (acidic residues) spans 358-377; the sequence is DDSDVEASESDNEDDPDADD. 3 positions are modified to phosphoserine: Ser-360, Ser-365, and Ser-367. The Matrin-type zinc-finger motif lies at 408 to 439; it reads YNCEICGNFTYKGPKAFQRHFAEWRHAHGMRC.

The protein belongs to the SF3A3 family. Probable component of a the U2 small nuclear ribonucleoproteins complex (U2 snRNP). Ubiquitous. In ovaries and testes, it is expressed in all germ and somatic cells. Highly expressed in spermatogonias and spermatocytes. Highly expressed in the germ cells of larval testes, while it is weakly expressed in fat body cells, in polyploid nuclei of salivary glands, and in larval brain.

It localises to the nucleus. Its function is as follows. Probable subunit of a splicing factor complex required for 'A' complex assembly formed by the stable binding of U2 snRNP to the branchpoint sequence (BPS) in pre-mRNA. Involved in male fertility. The protein is Splicing factor 3A subunit 3 (noi) of Drosophila melanogaster (Fruit fly).